Here is a 673-residue protein sequence, read N- to C-terminus: MACLLETPIRMSVLSEVTASSRHYVDRLFDPDPQKVLQGVIDMKNAVIGNNKQKANLIVLGAVPRLLYLLQQETSSTELKTECAVVLGSLAMGTENNVKSLLDCHIIPALLQGLLSPDLKFIEACLRCLRTIFTSPVTPEELLYTDATVIPHLMALLSRSRYTQEYICQIFSHCCKGPDHQTILFNHGAVQNIAHLLTSPSYKVRMQALKCFSVLAFENPQVSMTLVNVLVDGELLPQIFVKMLQRDKPIEMQLTSAKCLTYMCRAGAIRTDDSCIVLKTLPCLVRMCSKERLLEERVEGAETLAYLIEPDVELQRIASITDHLIAMLADYFKYPSSVSAITDIKRLDHDLKHAHELRQAAFKLYASLGANDEDIRKKIIETETMMDRIVTGSSESSVKVRLAAVRCLHSLSRSVQQLRTSFQDHAVWKPLMKVLQNAPDEILVVASSMLCNLLLEFSPSKEPILESGAVELLCGLTQSENPALRVNGIWALMNMAFQAEQKIKADILRSLSTEQLFRLLSDSDMNVLMKTLGLLRNLLSTRPHIDKIMSTHGKQIMQAVTLILEGEHSIEVKEQTLCILANIADGTTAKELIMTNDDILQKIKYYMGHSHVKLQLAAMFCISNLTWNEEEGSQERQDKLRDMGIVDILHKLSQSADSNLCDKAKTALQQYLA.

A2 carries the post-translational modification N-acetylalanine. ARM repeat units follow at residues 51 to 92, 95 to 134, 138 to 176, 178 to 217, 224 to 265, 269 to 309, 313 to 352, 374 to 413, 416 to 455, 458 to 497, 501 to 540, 543 to 585, 588 to 627, and 634 to 673; these read NKQK…SLAM, ENNV…TIFT, TPEE…HCCK, PDHQ…VLAF, MTLV…YMCR, IRTD…YLIE, ELQR…HDLK, DIRK…SLSR, QQLR…NLLL, SPSK…NMAF, QKIK…NLLS, PHID…NIAD, TAKE…NLTW, and QERQ…QYLA. S337 is modified (phosphoserine). S512 bears the Phosphoserine mark.

Identified in the CTLH complex that contains GID4, RANBP9 and/or RANBP10, MKLN1, MAEA, RMND5A (or alternatively its paralog RMND5B), GID8, ARMC8, WDR26 and YPEL5. Within this complex, MAEA, RMND5A (or alternatively its paralog RMND5B), GID8, WDR26, and RANBP9 and/or RANBP10 form the catalytic core, while GID4, MKLN1, ARMC8 and YPEL5 have ancillary roles.

It localises to the nucleus. Its subcellular location is the cytoplasm. Functionally, component of the CTLH E3 ubiquitin-protein ligase complex that selectively accepts ubiquitin from UBE2H and mediates ubiquitination and subsequent proteasomal degradation of the transcription factor HBP1. The chain is Armadillo repeat-containing protein 8 (Armc8) from Mus musculus (Mouse).